The chain runs to 215 residues: Cytochrome b6 (215 aa).

The helical transmembrane segment at 32 to 52 (IFYCLGGITLTCFLVQVATGF) threads the bilayer. C35 is a binding site for heme c. 2 residues coordinate heme b: H86 and H100. A run of 3 helical transmembrane segments spans residues 90–110 (ASMM…TGGF), 116–136 (LTWV…VTGY), and 186–206 (LHTF…FPMI). The heme b site is built by H187 and H202.

This sequence belongs to the cytochrome b family. PetB subfamily. As to quaternary structure, the 4 large subunits of the cytochrome b6-f complex are cytochrome b6, subunit IV (17 kDa polypeptide, PetD), cytochrome f and the Rieske protein, while the 4 small subunits are PetG, PetL, PetM and PetN. The complex functions as a dimer. Heme b serves as cofactor. Heme c is required as a cofactor.

It localises to the plastid. The protein resides in the chloroplast thylakoid membrane. In terms of biological role, component of the cytochrome b6-f complex, which mediates electron transfer between photosystem II (PSII) and photosystem I (PSI), cyclic electron flow around PSI, and state transitions. The chain is Cytochrome b6 from Daucus carota (Wild carrot).